The following is a 539-amino-acid chain: Eukaryotic translation initiation factor 3 subunit L (539 aa).

Residues 306–514 enclose the PCI domain; that stretch reads TFSDILLYVQ…IHIADTKVSH (209 aa).

The protein belongs to the eIF-3 subunit L family. In terms of assembly, component of the eukaryotic translation initiation factor 3 (eIF-3) complex. The eIF-3 complex interacts with pix.

The protein localises to the cytoplasm. Functionally, component of the eukaryotic translation initiation factor 3 (eIF-3) complex, which is involved in protein synthesis of a specialized repertoire of mRNAs and, together with other initiation factors, stimulates binding of mRNA and methionyl-tRNAi to the 40S ribosome. The eIF-3 complex specifically targets and initiates translation of a subset of mRNAs involved in cell proliferation. This is Eukaryotic translation initiation factor 3 subunit L from Drosophila willistoni (Fruit fly).